The primary structure comprises 145 residues: uncharacterized protein (145 aa).

Residues Met-1–Ser-25 are disordered. Basic and acidic residues predominate over residues Pro-14 to Ser-25.

This is an uncharacterized protein from His1 virus (isolate Australia/Victoria) (His1V).